The following is a 337-amino-acid chain: Holliday junction branch migration complex subunit RuvB (337 aa).

Residues 1–180 are large ATPase domain (RuvB-L); it reads MTRLISADKS…FGVISRLEFY (180 aa). ATP contacts are provided by residues Leu19, Arg20, Gly61, Lys64, Thr65, Thr66, 127–129, Arg170, Tyr180, and Arg217; that span reads EDF. Thr65 is a binding site for Mg(2+). Residues 181 to 251 are small ATPAse domain (RuvB-S); the sequence is THDELAFIIT…VADQALALLE (71 aa). The head domain (RuvB-H) stretch occupies residues 254–337; the sequence is EMGFDMMDRA…APEPPQGKLF (84 aa). DNA-binding residues include Arg309 and Arg314.

It belongs to the RuvB family. In terms of assembly, homohexamer. Forms an RuvA(8)-RuvB(12)-Holliday junction (HJ) complex. HJ DNA is sandwiched between 2 RuvA tetramers; dsDNA enters through RuvA and exits via RuvB. An RuvB hexamer assembles on each DNA strand where it exits the tetramer. Each RuvB hexamer is contacted by two RuvA subunits (via domain III) on 2 adjacent RuvB subunits; this complex drives branch migration. In the full resolvosome a probable DNA-RuvA(4)-RuvB(12)-RuvC(2) complex forms which resolves the HJ.

It is found in the cytoplasm. It catalyses the reaction ATP + H2O = ADP + phosphate + H(+). Functionally, the RuvA-RuvB-RuvC complex processes Holliday junction (HJ) DNA during genetic recombination and DNA repair, while the RuvA-RuvB complex plays an important role in the rescue of blocked DNA replication forks via replication fork reversal (RFR). RuvA specifically binds to HJ cruciform DNA, conferring on it an open structure. The RuvB hexamer acts as an ATP-dependent pump, pulling dsDNA into and through the RuvAB complex. RuvB forms 2 homohexamers on either side of HJ DNA bound by 1 or 2 RuvA tetramers; 4 subunits per hexamer contact DNA at a time. Coordinated motions by a converter formed by DNA-disengaged RuvB subunits stimulates ATP hydrolysis and nucleotide exchange. Immobilization of the converter enables RuvB to convert the ATP-contained energy into a lever motion, pulling 2 nucleotides of DNA out of the RuvA tetramer per ATP hydrolyzed, thus driving DNA branch migration. The RuvB motors rotate together with the DNA substrate, which together with the progressing nucleotide cycle form the mechanistic basis for DNA recombination by continuous HJ branch migration. Branch migration allows RuvC to scan DNA until it finds its consensus sequence, where it cleaves and resolves cruciform DNA. The polypeptide is Holliday junction branch migration complex subunit RuvB (Geobacter sp. (strain M21)).